The sequence spans 60 residues: UPF0337 protein SSP1134 (60 aa).

Residues M1–K41 form a disordered region. Positions D23–K41 are enriched in basic and acidic residues.

It belongs to the UPF0337 (CsbD) family.

This Staphylococcus saprophyticus subsp. saprophyticus (strain ATCC 15305 / DSM 20229 / NCIMB 8711 / NCTC 7292 / S-41) protein is UPF0337 protein SSP1134.